A 289-amino-acid polypeptide reads, in one-letter code: MEKYHGLEKIGEGTYGVVYKAQNSDGESFALKKIRLEKEDEGIPSTVSIREISILKELRHSNIVKLYDVIHAKKRLILVFEHLDQDLKKLIDVCDGGLESVTAKSFLLQLLNGIAYCHEHRVLHRDLKPQNLLINREGELKIADFGLARAFGIPARRYTHEVVTLWYRAPDILMGSKKYSTPIDIWSVGCIFAEMVNGRPLFPGVSETDQLMRIFKILGTPNSQNWPDVFKLPKYDPNFPVYEPLPWETFIKGLDDTGIDLLSKMLKLDPNQRITAKQAIEHPYFKETN.

The Protein kinase domain maps to 4–285; the sequence is YHGLEKIGEG…AKQAIEHPYF (282 aa). ATP is bound by residues 10-18 and lysine 32; that span reads IGEGTYGVV. At threonine 14 the chain carries Phosphothreonine. The residue at position 15 (tyrosine 15) is a Phosphotyrosine. Catalysis depends on aspartate 126, which acts as the Proton acceptor. Threonine 159 is modified (phosphothreonine).

Belongs to the protein kinase superfamily. CMGC Ser/Thr protein kinase family. CDC2/CDKX subfamily. As to quaternary structure, may form a complex composed of at least the catalytic subunit CRK2 and a cyclin. The cofactor is Mg(2+).

Its subcellular location is the cytoplasm. It carries out the reaction L-seryl-[protein] + ATP = O-phospho-L-seryl-[protein] + ADP + H(+). It catalyses the reaction L-threonyl-[protein] + ATP = O-phospho-L-threonyl-[protein] + ADP + H(+). The enzyme catalyses [DNA-directed RNA polymerase] + ATP = phospho-[DNA-directed RNA polymerase] + ADP + H(+). With respect to regulation, phosphorylation at Thr-14 or Tyr-15 inactivates the enzyme, while phosphorylation at Thr-159 activates it. In terms of biological role, serine/threonine-protein kinase. Involved in the control of the cell cycle. Required for entry into S-phase and mitosis. Probable component of the kinase complex that phosphorylates the repetitive C-terminus of RNA polymerase II. This Plasmodium yoelii yoelii protein is Cyclin-dependent kinase 2 homolog.